A 498-amino-acid polypeptide reads, in one-letter code: Glycerol kinase (498 aa).

Thr-12 contacts ADP. Positions 12, 13, and 14 each coordinate ATP. Thr-12 serves as a coordination point for sn-glycerol 3-phosphate. An ADP-binding site is contributed by Arg-16. Residues Arg-82, Glu-83, Tyr-134, and Asp-243 each contribute to the sn-glycerol 3-phosphate site. Arg-82, Glu-83, Tyr-134, Asp-243, and Gln-244 together coordinate glycerol. The ADP site is built by Thr-265 and Gly-308. Residues Thr-265, Gly-308, Gln-312, and Gly-409 each contribute to the ATP site. The ADP site is built by Gly-409 and Asn-413.

Belongs to the FGGY kinase family. Homotetramer and homodimer (in equilibrium).

The catalysed reaction is glycerol + ATP = sn-glycerol 3-phosphate + ADP + H(+). Its pathway is polyol metabolism; glycerol degradation via glycerol kinase pathway; sn-glycerol 3-phosphate from glycerol: step 1/1. Activated by phosphorylation and inhibited by fructose 1,6-bisphosphate (FBP). Functionally, key enzyme in the regulation of glycerol uptake and metabolism. Catalyzes the phosphorylation of glycerol to yield sn-glycerol 3-phosphate. The chain is Glycerol kinase from Clostridium botulinum (strain Loch Maree / Type A3).